The sequence spans 318 residues: Mitochondrial thiamine pyrophosphate carrier (318 aa).

Solcar repeat units lie at residues 13 to 106 (NSKL…LTEL), 116 to 202 (HQFS…LKRA), and 214 to 309 (TGNL…FCNL). 6 helical membrane passes run 19–39 (AVAGSVSGFVTRALISPLDVI), 87–107 (ILSIGYGAVQFLAFEELTELL), 122–142 (FVCGGLSAGTATLTVHPVDVL), 173–193 (VFYKGLTPTVIAIFPYAGLQF), 220–240 (LLCGCGSGVISKTLTYPLDLF), and 293–313 (ALSTGFMFFWYELFCNLFHCI).

Belongs to the mitochondrial carrier (TC 2.A.29) family.

The protein resides in the mitochondrion membrane. The catalysed reaction is thiamine phosphate(out) + thiamine diphosphate(in) = thiamine phosphate(in) + thiamine diphosphate(out). Its function is as follows. Mitochondrial transporter mediating uptake of thiamine diphosphate into mitochondria. It is not clear if the antiporter activity is affected by the membrane potential or by the proton electrochemical gradient. The chain is Mitochondrial thiamine pyrophosphate carrier (Slc25a19) from Rattus norvegicus (Rat).